The chain runs to 119 residues: Large ribosomal subunit protein bL20 (119 aa).

It belongs to the bacterial ribosomal protein bL20 family.

Binds directly to 23S ribosomal RNA and is necessary for the in vitro assembly process of the 50S ribosomal subunit. It is not involved in the protein synthesizing functions of that subunit. This chain is Large ribosomal subunit protein bL20, found in Granulibacter bethesdensis (strain ATCC BAA-1260 / CGDNIH1).